The chain runs to 195 residues: Protein GrpE (195 aa).

Belongs to the GrpE family. In terms of assembly, homodimer.

The protein localises to the cytoplasm. In terms of biological role, participates actively in the response to hyperosmotic and heat shock by preventing the aggregation of stress-denatured proteins, in association with DnaK and GrpE. It is the nucleotide exchange factor for DnaK and may function as a thermosensor. Unfolded proteins bind initially to DnaJ; upon interaction with the DnaJ-bound protein, DnaK hydrolyzes its bound ATP, resulting in the formation of a stable complex. GrpE releases ADP from DnaK; ATP binding to DnaK triggers the release of the substrate protein, thus completing the reaction cycle. Several rounds of ATP-dependent interactions between DnaJ, DnaK and GrpE are required for fully efficient folding. The polypeptide is Protein GrpE (Francisella tularensis subsp. holarctica (strain OSU18)).